The primary structure comprises 406 residues: RILP-like protein 1 (406 aa).

Positions 5–99 constitute an RH1 domain; the sequence is QLGAALDKSA…LEKEKKHKKE (95 aa). Residues 105 to 319 are a coiled coil; the sequence is DVWRGEAQDL…KVFMLQEEIA (215 aa). Disordered stretches follow at residues 234–272 and 323–351; these read EVSSLRQEVSRLKEKLKEQSRSNEEEAQEPVGPPSPAQE and SEEQEEENGPPLPDPSETLRTNPRSNFQP. Residues 241 to 257 show a composition bias toward basic and acidic residues; sequence EVSRLKEKLKEQSRSNE. Residues 289–358 form the RH2 domain; sequence RPRFTLQELR…FQPESGIKRL (70 aa). Residues 340–351 are compositionally biased toward polar residues; sequence TLRTNPRSNFQP.

It belongs to the RILPL family.

Its subcellular location is the cytoplasm. It localises to the cytosol. The protein localises to the cytoskeleton. It is found in the microtubule organizing center. The protein resides in the centrosome. Its subcellular location is the cell projection. It localises to the cilium. Its function is as follows. Plays a role in the regulation of cell shape and polarity. Plays a role in cellular protein transport, including protein transport away from primary cilia. Neuroprotective protein. This is RILP-like protein 1 (rilpl1) from Danio rerio (Zebrafish).